The primary structure comprises 248 residues: Ureidoacrylate amidohydrolase RutB (248 aa).

Aspartate 43 (proton acceptor) is an active-site residue. Residue lysine 152 is part of the active site. The active-site Nucleophile is cysteine 185.

It belongs to the isochorismatase family. RutB subfamily.

It carries out the reaction (Z)-3-ureidoacrylate + H2O + H(+) = (Z)-3-aminoacrylate + NH4(+) + CO2. The catalysed reaction is (Z)-3-ureidoacrylate + H2O = (Z)-3-aminoacrylate + carbamate + H(+). The enzyme catalyses (Z)-2-methylureidoacrylate + H2O + H(+) = (Z)-2-methylaminoacrylate + NH4(+) + CO2. In terms of biological role, hydrolyzes ureidoacrylate to form aminoacrylate and carbamate. The carbamate hydrolyzes spontaneously, thereby releasing one of the nitrogen atoms of the pyrimidine ring as ammonia and one of its carbon atoms as CO2. The chain is Ureidoacrylate amidohydrolase RutB from Serratia proteamaculans (strain 568).